We begin with the raw amino-acid sequence, 2971 residues long: uncharacterized protein (2971 aa).

The segment at 929–964 is disordered; the sequence is SANFSNGPEESSLSTRLHIQKKRKAKKQRLETRRQK. Over residues 936-945 the composition is skewed to polar residues; the sequence is PEESSLSTRL. Positions 946 to 955 are enriched in basic residues; sequence HIQKKRKAKK.

Its subcellular location is the plastid. The protein localises to the chloroplast. This is an uncharacterized protein from Chlamydomonas reinhardtii (Chlamydomonas smithii).